We begin with the raw amino-acid sequence, 172 residues long: Protein-export protein SecB (172 aa).

The tract at residues alanine 152 to histidine 172 is disordered.

It belongs to the SecB family. Homotetramer, a dimer of dimers. One homotetramer interacts with 1 SecA dimer.

Its subcellular location is the cytoplasm. Functionally, one of the proteins required for the normal export of preproteins out of the cell cytoplasm. It is a molecular chaperone that binds to a subset of precursor proteins, maintaining them in a translocation-competent state. It also specifically binds to its receptor SecA. The chain is Protein-export protein SecB from Cupriavidus taiwanensis (strain DSM 17343 / BCRC 17206 / CCUG 44338 / CIP 107171 / LMG 19424 / R1) (Ralstonia taiwanensis (strain LMG 19424)).